Here is a 287-residue protein sequence, read N- to C-terminus: Large ribosomal subunit protein uL2 (287 aa).

A disordered region spans residues 203–287 (LSAGKAGRNR…SKRGRGGRES (85 aa)). 2 stretches are compositionally biased toward basic residues: residues 209–220 (GRNRWKGRRPKV) and 258–287 (KTRKPKKASSKLIIRRRRKSSKRGRGGRES).

This sequence belongs to the universal ribosomal protein uL2 family. Part of the 50S ribosomal subunit. Forms a bridge to the 30S subunit in the 70S ribosome.

Its function is as follows. One of the primary rRNA binding proteins. Required for association of the 30S and 50S subunits to form the 70S ribosome, for tRNA binding and peptide bond formation. It has been suggested to have peptidyltransferase activity; this is somewhat controversial. Makes several contacts with the 16S rRNA in the 70S ribosome. This Nostoc sp. (strain PCC 7120 / SAG 25.82 / UTEX 2576) protein is Large ribosomal subunit protein uL2.